The primary structure comprises 154 residues: Myoglobin (154 aa).

The Globin domain occupies 2–148 (GLSDGEWQLV…FRNDMAAKYK (147 aa)). Ser4 is modified (phosphoserine). His65 is a binding site for nitrite. His65 contributes to the O2 binding site. A Phosphothreonine modification is found at Thr68. Position 94 (His94) interacts with heme b.

The protein belongs to the globin family. Monomeric.

Its subcellular location is the cytoplasm. It localises to the sarcoplasm. It carries out the reaction Fe(III)-heme b-[protein] + nitric oxide + H2O = Fe(II)-heme b-[protein] + nitrite + 2 H(+). The catalysed reaction is H2O2 + AH2 = A + 2 H2O. Its function is as follows. Monomeric heme protein which primary function is to store oxygen and facilitate its diffusion within muscle tissues. Reversibly binds oxygen through a pentacoordinated heme iron and enables its timely and efficient release as needed during periods of heightened demand. Depending on the oxidative conditions of tissues and cells, and in addition to its ability to bind oxygen, it also has a nitrite reductase activity whereby it regulates the production of bioactive nitric oxide. Under stress conditions, like hypoxia and anoxia, it also protects cells against reactive oxygen species thanks to its pseudoperoxidase activity. The chain is Myoglobin (MB) from Ochotona princeps (Southern American pika).